Consider the following 389-residue polypeptide: tRNA N(3)-cytidine methyltransferase METTL2 (389 aa).

Residues 1–20 (MAASFPEGVPETEDGKRPQF) form a disordered region. S-adenosyl-L-methionine-binding residues include Trp-78, Tyr-82, Gly-181, Asp-206, Asp-232, Leu-233, and Ile-253.

This sequence belongs to the methyltransferase superfamily. METL family. As to quaternary structure, monomer. Interacts with DALRD3.

It is found in the cytoplasm. The catalysed reaction is cytidine(32) in tRNA(Thr) + S-adenosyl-L-methionine = N(3)-methylcytidine(32) in tRNA(Thr) + S-adenosyl-L-homocysteine + H(+). It carries out the reaction cytidine(32) in tRNA(Arg)(CCU) + S-adenosyl-L-methionine = N(3)-methylcytidine(32) in tRNA(Arg)(CCU) + S-adenosyl-L-homocysteine + H(+). Its function is as follows. S-adenosyl-L-methionine-dependent methyltransferase that mediates N(3)-methylcytidine modification of residue 32 of the tRNA anticodon loop of tRNA(Thr)(UGU) and tRNA(Arg)(CCU). N(3)-methylcytidine methylation by METTL2 requires the N6-threonylcarbamoylation of tRNA (t6A37) by the EKC/KEOPS complex as prerequisite. The polypeptide is tRNA N(3)-cytidine methyltransferase METTL2 (Mus musculus (Mouse)).